The chain runs to 77 residues: Defensin-like protein 1 (77 aa).

The N-terminal stretch at 1–30 is a signal peptide; sequence MKLSVRFISAALLLFMVFIATGMGPVTVEA. 4 cysteine pairs are disulfide-bonded: Cys33/Cys77, Cys44/Cys64, Cys50/Cys71, and Cys54/Cys73.

This sequence belongs to the DEFL family. As to expression, expressed in the whole plant except roots.

The protein resides in the secreted. Its function is as follows. Confers broad-spectrum resistance to pathogens. The chain is Defensin-like protein 1 (PDF2.3) from Arabidopsis thaliana (Mouse-ear cress).